A 334-amino-acid chain; its full sequence is N-acetyl-gamma-glutamyl-phosphate reductase (334 aa).

Residue Cys-149 is part of the active site.

The protein belongs to the NAGSA dehydrogenase family. Type 1 subfamily.

The protein localises to the cytoplasm. The enzyme catalyses N-acetyl-L-glutamate 5-semialdehyde + phosphate + NADP(+) = N-acetyl-L-glutamyl 5-phosphate + NADPH + H(+). Its pathway is amino-acid biosynthesis; L-arginine biosynthesis; N(2)-acetyl-L-ornithine from L-glutamate: step 3/4. Its function is as follows. Catalyzes the NADPH-dependent reduction of N-acetyl-5-glutamyl phosphate to yield N-acetyl-L-glutamate 5-semialdehyde. This is N-acetyl-gamma-glutamyl-phosphate reductase from Sulfurimonas denitrificans (strain ATCC 33889 / DSM 1251) (Thiomicrospira denitrificans (strain ATCC 33889 / DSM 1251)).